We begin with the raw amino-acid sequence, 383 residues long: Bifunctional enzyme IspD/IspF (383 aa).

Residues 1-226 are 2-C-methyl-D-erythritol 4-phosphate cytidylyltransferase; the sequence is MKIAAVIVAA…ERQIMSETIT (226 aa). A 2-C-methyl-D-erythritol 2,4-cyclodiphosphate synthase region spans residues 227–383; that stretch reads VTGQGYDVHR…QAIVTARLTT (157 aa). Positions 233 and 235 each coordinate a divalent metal cation. 4-CDP-2-C-methyl-D-erythritol 2-phosphate is bound by residues 233-235 and 259-260; these read DVH and HS. H267 contacts a divalent metal cation. 4-CDP-2-C-methyl-D-erythritol 2-phosphate is bound by residues 281–283, 357–360, F364, and R367; these read DIG and TTTE.

In the N-terminal section; belongs to the IspD/TarI cytidylyltransferase family. IspD subfamily. The protein in the C-terminal section; belongs to the IspF family. A divalent metal cation is required as a cofactor.

It catalyses the reaction 2-C-methyl-D-erythritol 4-phosphate + CTP + H(+) = 4-CDP-2-C-methyl-D-erythritol + diphosphate. The enzyme catalyses 4-CDP-2-C-methyl-D-erythritol 2-phosphate = 2-C-methyl-D-erythritol 2,4-cyclic diphosphate + CMP. Its pathway is isoprenoid biosynthesis; isopentenyl diphosphate biosynthesis via DXP pathway; isopentenyl diphosphate from 1-deoxy-D-xylulose 5-phosphate: step 2/6. The protein operates within isoprenoid biosynthesis; isopentenyl diphosphate biosynthesis via DXP pathway; isopentenyl diphosphate from 1-deoxy-D-xylulose 5-phosphate: step 4/6. Its function is as follows. Bifunctional enzyme that catalyzes the formation of 4-diphosphocytidyl-2-C-methyl-D-erythritol from CTP and 2-C-methyl-D-erythritol 4-phosphate (MEP) (IspD), and catalyzes the conversion of 4-diphosphocytidyl-2-C-methyl-D-erythritol 2-phosphate (CDP-ME2P) to 2-C-methyl-D-erythritol 2,4-cyclodiphosphate (ME-CPP) with a corresponding release of cytidine 5-monophosphate (CMP) (IspF). The protein is Bifunctional enzyme IspD/IspF of Maricaulis maris (strain MCS10) (Caulobacter maris).